A 212-amino-acid polypeptide reads, in one-letter code: uncharacterized protein (212 aa).

The disordered stretch occupies residues 97-151 (SDASEAKNDDRRSDGRFALYSVSDTPETTTASRSADRSTNPKTAKHPKSAAKPTV). Over residues 100 to 111 (SEAKNDDRRSDG) the composition is skewed to basic and acidic residues.

This is an uncharacterized protein from Mycobacterium tuberculosis (strain CDC 1551 / Oshkosh).